A 141-amino-acid chain; its full sequence is Putative pre-16S rRNA nuclease (141 aa).

The protein belongs to the YqgF nuclease family.

It localises to the cytoplasm. Functionally, could be a nuclease involved in processing of the 5'-end of pre-16S rRNA. The protein is Putative pre-16S rRNA nuclease of Aliivibrio fischeri (strain ATCC 700601 / ES114) (Vibrio fischeri).